We begin with the raw amino-acid sequence, 506 residues long: Sporulation kinase D (506 aa).

A run of 2 helical transmembrane segments spans residues 17–37 (VKLYIILVVIPAIVISFFVYE) and 250–270 (LVLPLSCIIVLLNILFILVLY). The Histidine kinase domain occupies 298-505 (STAHEIRNPL…EVTITLPVSA (208 aa)). His-301 bears the Phosphohistidine; by autocatalysis mark.

As to quaternary structure, oligomerizes, probably forms homodimers; oligomerization is assisted by FloT. Interacts with FloT.

The protein resides in the cell membrane. It catalyses the reaction ATP + protein L-histidine = ADP + protein N-phospho-L-histidine.. Phosphorylates the sporulation-regulatory protein spo0F and, to a minor extent, is responsible for heterogeneous expression of spo0A during logarithmical growth. Also phosphorylates spo0A under biofilm growth conditions. This is Sporulation kinase D (kinD) from Bacillus subtilis (strain 168).